Here is a 116-residue protein sequence, read N- to C-terminus: Aspartate 1-decarboxylase (116 aa).

S25 functions as the Schiff-base intermediate with substrate; via pyruvic acid in the catalytic mechanism. A Pyruvic acid (Ser) modification is found at S25. Position 57 (T57) interacts with substrate. The Proton donor role is filled by Y58. Residue 73-75 (GAA) participates in substrate binding.

It belongs to the PanD family. As to quaternary structure, heterooctamer of four alpha and four beta subunits. It depends on pyruvate as a cofactor. Is synthesized initially as an inactive proenzyme, which is activated by self-cleavage at a specific serine bond to produce a beta-subunit with a hydroxyl group at its C-terminus and an alpha-subunit with a pyruvoyl group at its N-terminus.

It is found in the cytoplasm. The enzyme catalyses L-aspartate + H(+) = beta-alanine + CO2. It functions in the pathway cofactor biosynthesis; (R)-pantothenate biosynthesis; beta-alanine from L-aspartate: step 1/1. In terms of biological role, catalyzes the pyruvoyl-dependent decarboxylation of aspartate to produce beta-alanine. This is Aspartate 1-decarboxylase from Leptospira interrogans serogroup Icterohaemorrhagiae serovar copenhageni (strain Fiocruz L1-130).